We begin with the raw amino-acid sequence, 219 residues long: MAELYVKPGNKERGWNDPPQFSYGLQTQTGGTKRTPLTKRVAAPQDGSPRAPETSGPPPVDHPPPSSKASRPPPMGSCPASGVDPPSSPVIESETLIEDVLRPLEQALEDCRGHTKQVCDDISRRLALLHEQWDGGKLSVPVKKRMALLVQELLHHQWDTADDIHRSLMVDHVTEVSQWMVGVKRLIAEKRSLSSEENKEEKSTVAPENQTIPGFQPSS.

Disordered regions lie at residues 1 to 90 (MAEL…SSPV) and 192 to 219 (SLSS…QPSS). Over residues 23–32 (YGLQTQTGGT) the composition is skewed to polar residues. At serine 48 the chain carries Phosphoserine. The segment covering 55 to 76 (SGPPPVDHPPPSSKASRPPPMG) has biased composition (pro residues). The span at 192 to 203 (SLSSEENKEEKS) shows a compositional bias: basic and acidic residues. A compositionally biased stretch (polar residues) spans 206–219 (APENQTIPGFQPSS).

It belongs to the SRA1 family. In terms of assembly, SRA1 RNA exists in a ribonucleoprotein complex containing NCOA1. The RNA also forms a complex with PUS1 and RARG in the nucleus. Interacts with AR. In terms of tissue distribution, expressed in various prostate cancer cell lines.

It is found in the nucleus. It localises to the cytoplasm. Functional RNA which acts as a transcriptional coactivator that selectively enhances steroid receptor-mediated transactivation ligand-independently through a mechanism involving the modulating N-terminal domain (AF-1) of steroid receptors. Also mediates transcriptional coactivation of steroid receptors ligand-dependently through the steroid-binding domain (AF-2). Enhances cellular proliferation and differentiation and promotes apoptosis in vivo. May play a role in tumorigenesis. In Rattus norvegicus (Rat), this protein is Steroid receptor RNA activator 1.